A 907-amino-acid chain; its full sequence is Dual serine/threonine and tyrosine protein kinase (907 aa).

The stretch at 373–409 (RKKENELYESLMNIANRKQEEMKDMIVETLNTMKEEL) forms a coiled coil. In terms of domain architecture, Protein kinase spans 630 to 884 (PKLGQELGRG…PLLGIVQPML (255 aa)). Residues 636–644 (LGRGQYGVV) and Lys659 each bind ATP. The active-site Proton acceptor is Asp755.

The protein belongs to the protein kinase superfamily. Ser/Thr protein kinase family.

It localises to the cytoplasm. It is found in the cell membrane. Its subcellular location is the apical cell membrane. The protein resides in the basolateral cell membrane. The protein localises to the cell junction. It carries out the reaction L-seryl-[protein] + ATP = O-phospho-L-seryl-[protein] + ADP + H(+). The enzyme catalyses L-threonyl-[protein] + ATP = O-phospho-L-threonyl-[protein] + ADP + H(+). The catalysed reaction is L-tyrosyl-[protein] + ATP = O-phospho-L-tyrosyl-[protein] + ADP + H(+). In terms of biological role, acts as a positive regulator of ERK phosphorylation downstream of fibroblast growth factor-receptor activation. Involved in the regulation of both caspase-dependent apoptosis and caspase-independent cell death. In the skin, it plays a predominant role in suppressing caspase-dependent apoptosis in response to UV stress in a range of dermal cell types. The protein is Dual serine/threonine and tyrosine protein kinase of Macaca mulatta (Rhesus macaque).